The primary structure comprises 185 residues: Ribosome-recycling factor (185 aa).

Belongs to the RRF family.

Its subcellular location is the cytoplasm. Its function is as follows. Responsible for the release of ribosomes from messenger RNA at the termination of protein biosynthesis. May increase the efficiency of translation by recycling ribosomes from one round of translation to another. This Corynebacterium efficiens (strain DSM 44549 / YS-314 / AJ 12310 / JCM 11189 / NBRC 100395) protein is Ribosome-recycling factor.